Reading from the N-terminus, the 658-residue chain is Threonine--tRNA ligase (658 aa).

The region spanning 1 to 64 is the TGS domain; the sequence is MSCSISLSFP…GQSGQVEIIT (64 aa). Residues 246 to 549 are catalytic; that stretch reads DHRRLGREMD…LIENFAGHMP (304 aa). Residues cysteine 343, histidine 394, and histidine 526 each contribute to the Zn(2+) site.

Belongs to the class-II aminoacyl-tRNA synthetase family. In terms of assembly, homodimer. It depends on Zn(2+) as a cofactor.

It localises to the cytoplasm. The catalysed reaction is tRNA(Thr) + L-threonine + ATP = L-threonyl-tRNA(Thr) + AMP + diphosphate + H(+). Its function is as follows. Catalyzes the attachment of threonine to tRNA(Thr) in a two-step reaction: L-threonine is first activated by ATP to form Thr-AMP and then transferred to the acceptor end of tRNA(Thr). Also edits incorrectly charged L-seryl-tRNA(Thr). The protein is Threonine--tRNA ligase of Bartonella tribocorum (strain CIP 105476 / IBS 506).